A 61-amino-acid polypeptide reads, in one-letter code: Probable tautomerase spyM18_1099 (61 aa).

The Proton acceptor; via imino nitrogen role is filled by Pro-2.

This sequence belongs to the 4-oxalocrotonate tautomerase family.

This chain is Probable tautomerase spyM18_1099, found in Streptococcus pyogenes serotype M18 (strain MGAS8232).